Consider the following 1395-residue polypeptide: G2/mitotic-specific cyclin-B3 (1395 aa).

The disordered stretch occupies residues 1 to 59 (MLLPLPPQSSKPVPKKSQSSKIVPSHHDPSEKTGENCQTKISPSSLQESPSSLQGALKK). Residues 10–23 (SKPVPKKSQSSKIV) are compositionally biased toward low complexity. The span at 25 to 34 (SHHDPSEKTG) shows a compositional bias: basic and acidic residues. The segment covering 42-54 (SPSSLQESPSSLQ) has biased composition (low complexity). A D-box motif is present at residues 60–68 (RSAFEDLTN). Disordered regions lie at residues 418–464 (LSIK…PTEE) and 1074–1122 (ATMT…DSSD). The segment covering 419 to 431 (SIKEKPSTEKESF) has biased composition (basic and acidic residues). Residues 1082 to 1093 (SRTTTESSACES) are compositionally biased toward low complexity.

Belongs to the cyclin family. Cyclin AB subfamily. Interacts with CDK2 kinase. Post-translationally, ubiquitinated. Ubiquitination leads to its degradation during anaphase entry, after degradation of CCNB1. Testis specific. In testis, it is expressed in developing germ cells, but not in Leydig cells. Weakly or not expressed in other tissues.

The protein resides in the nucleus. Functionally, cyclins are positive regulatory subunits of the cyclin-dependent kinases (CDKs), and thereby play an essential role in the control of the cell cycle, notably via their destruction during cell division. Its tissue specificity suggest that it may be required during early meiotic prophase I. This Homo sapiens (Human) protein is G2/mitotic-specific cyclin-B3 (CCNB3).